The sequence spans 629 residues: tRNA uridine 5-carboxymethylaminomethyl modification enzyme MnmG (629 aa).

FAD is bound by residues 13–18 (GGGHAG), valine 125, and serine 180. 273-287 (GPRYCPSIEDKIHRF) is an NAD(+) binding site. Glutamine 370 is a binding site for FAD.

Belongs to the MnmG family. Homodimer. Heterotetramer of two MnmE and two MnmG subunits. The cofactor is FAD.

The protein resides in the cytoplasm. Functionally, NAD-binding protein involved in the addition of a carboxymethylaminomethyl (cmnm) group at the wobble position (U34) of certain tRNAs, forming tRNA-cmnm(5)s(2)U34. The sequence is that of tRNA uridine 5-carboxymethylaminomethyl modification enzyme MnmG from Shewanella oneidensis (strain ATCC 700550 / JCM 31522 / CIP 106686 / LMG 19005 / NCIMB 14063 / MR-1).